The following is a 351-amino-acid chain: Lipoyl synthase, mitochondrial (351 aa).

7 residues coordinate [4Fe-4S] cluster: Cys-84, Cys-89, Cys-95, Cys-115, Cys-119, Cys-122, and Ser-330. Positions 100-319 constitute a Radical SAM core domain; that stretch reads DKSKATATIM…QKRAMDMGFL (220 aa).

This sequence belongs to the radical SAM superfamily. Lipoyl synthase family. It depends on [4Fe-4S] cluster as a cofactor.

Its subcellular location is the mitochondrion. It carries out the reaction [[Fe-S] cluster scaffold protein carrying a second [4Fe-4S](2+) cluster] + N(6)-octanoyl-L-lysyl-[protein] + 2 oxidized [2Fe-2S]-[ferredoxin] + 2 S-adenosyl-L-methionine + 4 H(+) = [[Fe-S] cluster scaffold protein] + N(6)-[(R)-dihydrolipoyl]-L-lysyl-[protein] + 4 Fe(3+) + 2 hydrogen sulfide + 2 5'-deoxyadenosine + 2 L-methionine + 2 reduced [2Fe-2S]-[ferredoxin]. It participates in protein modification; protein lipoylation via endogenous pathway; protein N(6)-(lipoyl)lysine from octanoyl-[acyl-carrier-protein]: step 2/2. Its function is as follows. Catalyzes the radical-mediated insertion of two sulfur atoms into the C-6 and C-8 positions of the octanoyl moiety bound to the lipoyl domains of lipoate-dependent enzymes, thereby converting the octanoylated domains into lipoylated derivatives. This is Lipoyl synthase, mitochondrial from Yarrowia lipolytica (strain CLIB 122 / E 150) (Yeast).